A 35-amino-acid chain; its full sequence is Tau-theraphotoxin-Pc1b (35 aa).

Intrachain disulfides connect cysteine 3-cysteine 17, cysteine 10-cysteine 22, and cysteine 16-cysteine 29. Phenylalanine 35 bears the Phenylalanine amide mark.

Belongs to the neurotoxin 10 (Hwtx-1) family. 62 (Vatx) subfamily. As to expression, expressed by the venom gland.

It is found in the secreted. Selectively activates the mammalian capsaicin receptor TRPV1, a non-selective cation channel expressed by sensory neurons of the pain pathway. Is more potent than VaTx1, but less potent than VaTx3. Interacts with distinct regions of the channel than capsaicin, since it only acts on the extracellular face of the channel, and capsaicin binds to the cytosolic side. Also activates avian TRPV1, which is insensitive to capsaicin. Produce weak inhibition on potassium channels Kv2.1/KCNB1. This is Tau-theraphotoxin-Pc1b from Psalmopoeus cambridgei (Trinidad chevron tarantula).